We begin with the raw amino-acid sequence, 327 residues long: uncharacterized protein (327 aa).

Disordered stretches follow at residues 127–170 and 298–327; these read LSEF…GIYR and NFEDVNDGSLASPVQIGQSYRKRKKNLKRR. A phosphoserine mark is found at S153, S154, and S309. The span at 317–327 shows a compositional bias: basic residues; the sequence is YRKRKKNLKRR.

This is an uncharacterized protein from Schizosaccharomyces pombe (strain 972 / ATCC 24843) (Fission yeast).